We begin with the raw amino-acid sequence, 159 residues long: U1 small nuclear ribonucleoprotein C (159 aa).

The Matrin-type zinc-finger motif lies at 4–36 (FYCDYCDTYLTHDSPSVRKTHCSGRKHKENVKD). 2 disordered regions span residues 63 to 95 (PPTP…MPAP) and 139 to 159 (MRPP…RPDR). Over residues 77-95 (IPPPPSMGGPPRPGMMPAP) the composition is skewed to pro residues.

This sequence belongs to the U1 small nuclear ribonucleoprotein C family. Component of the U1 snRNP. The U1 snRNP is composed of the U1 snRNA and the 7 core Sm proteins snrpb, snrpd1, snrpd2, snrpd3, snrpe, snrpf and snrpg that assemble in a heptameric protein ring on the Sm site of the small nuclear RNA to form the core snRNP, and at least 3 U1 snRNP-specific proteins snrnp70/U1-70K, snrpa/U1-A and snrpc/U1-C. snrpc/U1-C interacts with U1 snRNA and the 5' splice-site region of the pre-mRNA.

Its subcellular location is the nucleus. Component of the spliceosomal U1 snRNP, which is essential for recognition of the pre-mRNA 5' splice-site and the subsequent assembly of the spliceosome. snrpc/U1-C is directly involved in initial 5' splice-site recognition for both constitutive and regulated alternative splicing. The interaction with the 5' splice-site seems to precede base-pairing between the pre-mRNA and the U1 snRNA. Stimulates commitment or early (E) complex formation by stabilizing the base pairing of the 5' end of the U1 snRNA and the 5' splice-site region. This Xenopus tropicalis (Western clawed frog) protein is U1 small nuclear ribonucleoprotein C.